A 150-amino-acid polypeptide reads, in one-letter code: 3-hydroxyacyl-[acyl-carrier-protein] dehydratase FabZ (150 aa).

H52 is an active-site residue.

It belongs to the thioester dehydratase family. FabZ subfamily.

The protein resides in the cytoplasm. It catalyses the reaction a (3R)-hydroxyacyl-[ACP] = a (2E)-enoyl-[ACP] + H2O. Its function is as follows. Involved in unsaturated fatty acids biosynthesis. Catalyzes the dehydration of short chain beta-hydroxyacyl-ACPs and long chain saturated and unsaturated beta-hydroxyacyl-ACPs. The chain is 3-hydroxyacyl-[acyl-carrier-protein] dehydratase FabZ from Albidiferax ferrireducens (strain ATCC BAA-621 / DSM 15236 / T118) (Rhodoferax ferrireducens).